The primary structure comprises 539 residues: Chaperonin GroEL (539 aa).

ATP contacts are provided by residues 29–32 (TLGP), 86–90 (DGTTT), G413, 476–478 (NAA), and D492.

Belongs to the chaperonin (HSP60) family. Forms a cylinder of 14 subunits composed of two heptameric rings stacked back-to-back. Interacts with the co-chaperonin GroES.

Its subcellular location is the cytoplasm. The enzyme catalyses ATP + H2O + a folded polypeptide = ADP + phosphate + an unfolded polypeptide.. Together with its co-chaperonin GroES, plays an essential role in assisting protein folding. The GroEL-GroES system forms a nano-cage that allows encapsulation of the non-native substrate proteins and provides a physical environment optimized to promote and accelerate protein folding. This is Chaperonin GroEL from Macrococcus caseolyticus (strain JCSC5402) (Macrococcoides caseolyticum).